Consider the following 76-residue polypeptide: uncharacterized protein (76 aa).

Positions 1–15 (MYLPLLLFCVISCYG) are cleaved as a signal peptide.

This is an uncharacterized protein from Magallana gigas (Pacific oyster).